Consider the following 465-residue polypeptide: tRNA modification GTPase MnmE (465 aa).

3 residues coordinate (6S)-5-formyl-5,6,7,8-tetrahydrofolate: Arg21, Glu85, and Lys124. Residues 220–387 (GVPVAIIGET…LQQRLVAAAH (168 aa)) form the TrmE-type G domain. Asn230 lines the K(+) pocket. Residues 230-235 (NAGKST), 249-255 (SDIHGTT), and 274-277 (DTAG) each bind GTP. Ser234 contacts Mg(2+). K(+)-binding residues include Ser249, Ile251, and Thr254. Thr255 contacts Mg(2+). Lys465 serves as a coordination point for (6S)-5-formyl-5,6,7,8-tetrahydrofolate.

This sequence belongs to the TRAFAC class TrmE-Era-EngA-EngB-Septin-like GTPase superfamily. TrmE GTPase family. As to quaternary structure, homodimer. Heterotetramer of two MnmE and two MnmG subunits. K(+) is required as a cofactor.

The protein resides in the cytoplasm. Exhibits a very high intrinsic GTPase hydrolysis rate. Involved in the addition of a carboxymethylaminomethyl (cmnm) group at the wobble position (U34) of certain tRNAs, forming tRNA-cmnm(5)s(2)U34. The chain is tRNA modification GTPase MnmE from Bacteroides fragilis (strain YCH46).